The primary structure comprises 590 residues: Auxin response factor 20 (590 aa).

The TF-B3 DNA-binding region spans 126–224 (FTKVLTASDT…ELRVGIRRAR (99 aa)). The PB1 domain occupies 495-576 (RTCTKVQMQG…MVKKILIYSK (82 aa)).

The protein belongs to the ARF family. As to quaternary structure, homodimers and heterodimers.

The protein localises to the nucleus. Auxin response factors (ARFs) are transcriptional factors that bind specifically to the DNA sequence 5'-TGTCTC-3' found in the auxin-responsive promoter elements (AuxREs). Could act as transcriptional activator or repressor. Formation of heterodimers with Aux/IAA proteins may alter their ability to modulate early auxin response genes expression. This chain is Auxin response factor 20 (ARF20), found in Arabidopsis thaliana (Mouse-ear cress).